A 281-amino-acid polypeptide reads, in one-letter code: uncharacterized protein (281 aa).

This is an uncharacterized protein from Methanocaldococcus jannaschii (strain ATCC 43067 / DSM 2661 / JAL-1 / JCM 10045 / NBRC 100440) (Methanococcus jannaschii).